The chain runs to 377 residues: PqqA peptide cyclase (377 aa).

Residues Val8 to Thr224 enclose the Radical SAM core domain. Residues Cys22 and Cys26 each contribute to the [4Fe-4S] cluster site.

Belongs to the radical SAM superfamily. PqqE family. As to quaternary structure, interacts with PqqD. The interaction is necessary for activity of PqqE. It depends on [4Fe-4S] cluster as a cofactor.

It catalyses the reaction [PQQ precursor protein] + S-adenosyl-L-methionine = E-Y cross-linked-[PQQ precursor protein] + 5'-deoxyadenosine + L-methionine + H(+). It participates in cofactor biosynthesis; pyrroloquinoline quinone biosynthesis. In terms of biological role, catalyzes the cross-linking of a glutamate residue and a tyrosine residue in the PqqA protein as part of the biosynthesis of pyrroloquinoline quinone (PQQ). The protein is PqqA peptide cyclase (pqqE) of Rahnella aquatilis.